The following is a 309-amino-acid chain: Cutinase (309 aa).

The signal sequence occupies residues 1–47; it reads MSALTSQPTSSGSSEKIPRLRGWRAKAAGVVLAALALTTGVAAPAPA. Catalysis depends on S178, which acts as the Nucleophile. Catalysis depends on charge relay system residues D224 and H256. The cysteines at positions 289 and 305 are disulfide-linked.

Belongs to the AB hydrolase superfamily.

It is found in the secreted. It carries out the reaction a carboxylic ester + H2O = an alcohol + a carboxylate + H(+). The catalysed reaction is a triacylglycerol + H2O = a diacylglycerol + a fatty acid + H(+). The enzyme catalyses 1,2,3-tri-(9Z-octadecenoyl)-glycerol + H2O = di-(9Z)-octadecenoylglycerol + (9Z)-octadecenoate + H(+). It catalyses the reaction (6-hydroxyhexanoyl)(n) + H2O = (6-hydroxyhexanoyl)(n-1) + 6-hydroxyhexanoate + H(+). It carries out the reaction cutin + H2O = cutin monomers.. Its activity is regulated as follows. No effect on activity by SDS or chelating agents ethylenediaminetetraacetic acid (EDTA) or sodium citrate. No effect on activity by metal ions Ag(+), Ba(2+), Ca(2+), Co(2+), Cu(2+), Mn(2+), Ni(2+), Pb(2+) or Zn(2+). Activated by 1 mM digitonin and sodium deoxycholate, and reducing agents 1 mM 1,4-dithiothreitol, beta-mercaptoethanol and ascorbic acid. Activated by benzene, n-hexane, p-xylene and toluene. Activated by Fe(3+). Inhibited slightly by 1 mM of different chain length fatty acids, and only marginally by 6.0 M urea. Inhibited strongly with chemical modification by reagents phenyl methyl sulfonylfluorid (PMSF), 1-ethyl-3-(3-dimethylaminopropyl) carbodiimide (EDAC), diethylpyrocarbonate (DEPC) and N-bromosuccinimide (NBS). Inhibited by pyridine, DMSO, t-butanol and dodecane. Inhibited by Li(+), Hg(2+) and Mg(2+). No inhibition with chemical modification by reagents N-acetylimidazole (NAI), citraconic anhydride (CA), iodoacetate (IA) and phenylglyoxal (PG). Functionally, catalyzes the hydrolysis of cutin, a polyester that forms the structure of plant cuticle. Shows esterase activity towards p-nitrophenol-linked aliphatic esters (pNP-aliphatic esters). Has a preference for medium chain length (C-4 to C-12) fatty acid esters. Active with p-nitrophenyl palmitate (p-NPP) as substrate. Hydrolyzes triacylglycerol substrates non-specifically with a preference for long, unsaturated fatty acyl chains with the highest activity for triolein. Substrates with cis-9 unsaturation are preferred over the saturated triacylglycerols. Hydrolyzes a wide range of natural oils, especially olive oil, with relatively high activity. Capable of catalyzing synthesis of the flavor ester isoamyl acetate by esterification of isoamyl alcohol using acetic acid as an acyl donor. Degrades synthetic aliphatic polyesters, namely poly(1,4-butylene succinate) extended with 1,6-diisocyanatohexane (PBSc-D) and poly(epsilon-caprolactone) (PCL) plastics. Does not degrade poly(lactic acid) (PLA) nor aromatic poly(ethylene terephthalate) (PET), the most abundant polyester plastic in the world. This Amycolatopsis mediterranei (strain S699) (Nocardia mediterranei) protein is Cutinase.